Here is a 906-residue protein sequence, read N- to C-terminus: Protein translocase subunit SecA (906 aa).

Residues glutamine 87, 105-109 (GEGKT), and aspartate 507 contribute to the ATP site. Positions 890, 892, 901, and 902 each coordinate Zn(2+).

It belongs to the SecA family. Monomer and homodimer. Part of the essential Sec protein translocation apparatus which comprises SecA, SecYEG and auxiliary proteins SecDF-YajC and YidC. The cofactor is Zn(2+).

The protein localises to the cell inner membrane. Its subcellular location is the cytoplasm. It catalyses the reaction ATP + H2O + cellular proteinSide 1 = ADP + phosphate + cellular proteinSide 2.. In terms of biological role, part of the Sec protein translocase complex. Interacts with the SecYEG preprotein conducting channel. Has a central role in coupling the hydrolysis of ATP to the transfer of proteins into and across the cell membrane, serving both as a receptor for the preprotein-SecB complex and as an ATP-driven molecular motor driving the stepwise translocation of polypeptide chains across the membrane. The chain is Protein translocase subunit SecA from Thiobacillus denitrificans (strain ATCC 25259 / T1).